A 452-amino-acid chain; its full sequence is tRNA modification GTPase MnmE (452 aa).

(6S)-5-formyl-5,6,7,8-tetrahydrofolate is bound by residues Arg-21, Glu-78, and Lys-118. One can recognise a TrmE-type G domain in the interval 214 to 375; sequence GMKVVIAGRP…LREHLKQAMG (162 aa). Residue Asn-224 coordinates K(+). Residues 224–229, 243–249, and 268–271 contribute to the GTP site; these read NAGKSS, TDIAGTT, and DTAG. Ser-228 is a binding site for Mg(2+). K(+)-binding residues include Thr-243, Ile-245, and Thr-248. Thr-249 lines the Mg(2+) pocket. Residue Lys-452 coordinates (6S)-5-formyl-5,6,7,8-tetrahydrofolate.

This sequence belongs to the TRAFAC class TrmE-Era-EngA-EngB-Septin-like GTPase superfamily. TrmE GTPase family. In terms of assembly, homodimer. Heterotetramer of two MnmE and two MnmG subunits. The cofactor is K(+).

It localises to the cytoplasm. In terms of biological role, exhibits a very high intrinsic GTPase hydrolysis rate. Involved in the addition of a carboxymethylaminomethyl (cmnm) group at the wobble position (U34) of certain tRNAs, forming tRNA-cmnm(5)s(2)U34. The chain is tRNA modification GTPase MnmE from Haemophilus influenzae (strain PittGG).